The primary structure comprises 274 residues: Sulfur carrier protein FdhD (274 aa).

The active-site Cysteine persulfide intermediate is the Cys121. 258-263 serves as a coordination point for Mo-bis(molybdopterin guanine dinucleotide); it reads FSKPGR.

This sequence belongs to the FdhD family.

The protein resides in the cytoplasm. Functionally, required for formate dehydrogenase (FDH) activity. Acts as a sulfur carrier protein that transfers sulfur from IscS to the molybdenum cofactor prior to its insertion into FDH. This is Sulfur carrier protein FdhD from Yersinia pseudotuberculosis serotype IB (strain PB1/+).